We begin with the raw amino-acid sequence, 701 residues long: 1,4-alpha-glucan branching enzyme GlgB (701 aa).

Asp381 functions as the Nucleophile in the catalytic mechanism. Glu434 functions as the Proton donor in the catalytic mechanism.

The protein belongs to the glycosyl hydrolase 13 family. GlgB subfamily. In terms of assembly, monomer.

The enzyme catalyses Transfers a segment of a (1-&gt;4)-alpha-D-glucan chain to a primary hydroxy group in a similar glucan chain.. It participates in glycan biosynthesis; glycogen biosynthesis. In terms of biological role, catalyzes the formation of the alpha-1,6-glucosidic linkages in glycogen by scission of a 1,4-alpha-linked oligosaccharide from growing alpha-1,4-glucan chains and the subsequent attachment of the oligosaccharide to the alpha-1,6 position. This chain is 1,4-alpha-glucan branching enzyme GlgB, found in Jannaschia sp. (strain CCS1).